The primary structure comprises 897 residues: Transportin-2 (897 aa).

20 HEAT repeats span residues 9 to 36, 41 to 79, 88 to 121, 127 to 164, 171 to 201, 214 to 241, 253 to 280, 296 to 386, 394 to 422, 434 to 461, 475 to 508, 516 to 549, 557 to 595, 603 to 654, 665 to 696, 704 to 737, 745 to 790, 798 to 831, 840 to 871, and 874 to 894; these read GLQQVLQLLKDSQSPNTATQRIVQDKLK, FPDFNNYLIFVLTRLKSEDEPTRSLSGLILKNNVKAHYQ, FIKQECLNNIGDASSLIRATIGILITTIASKGEL, LLPQLCNLLNSEDYNTCEGAFGALQKICEDSSELLDSD, NIMIPKFLQFFKHCSPKIRSHAIACVNQFIM, FIEHLFALAVDDDPEVRKNVCRALVMLL, HSIIQYMLQRTQDHDENVALEACEFWLT, VQLI…LANV, HLLPLLKGLLFHPEWVVKESGILVLGAIA, PELIPHLIQCLSDKKALVRSIACWTLSR, LKPLMTELLKRILDGNKRVQEAACSAFATLEEEA, LSYILDTLVFAFGKYQHKNLLILYDAIGTLADSV, EYIQKLMPPLIQKWNELKDEDKDLFPLLECLSSVATALQ, EPVY…GLGG, IMTLLFQCMQDSMPEVRQSSFALLGDLTKACF, AEFMPILGTNLNPEFISVCNNATWAIGEICMQMG, QMVL…YVCP, QQFIRPWCTSLRNIRDNEEKDSAFRGICMMIGVN, IFFCDAVASWVSPKDDLRDMFYKILHGFKDQV, and DNWQQFSEQFPPLLKERLAAF. One can recognise an Importin N-terminal domain in the interval 31–99; the sequence is VQDKLKQLNQ…KQECLNNIGD (69 aa). The disordered stretch occupies residues 325-364; it reads AVPDSEQDIKPRFHKSRTVTLPHEAERPDGSEDAEDDDDD. Acidic residues predominate over residues 355 to 364; the sequence is SEDAEDDDDD. The residue at position 862 (Lys862) is an N6-acetyllysine.

This sequence belongs to the importin beta family. Importin beta-2 subfamily.

It is found in the cytoplasm. Its subcellular location is the nucleus. In terms of biological role, probably functions in nuclear protein import as nuclear transport receptor. Serves as receptor for nuclear localization signals (NLS) in cargo substrates. Is thought to mediate docking of the importin/substrate complex to the nuclear pore complex (NPC) through binding to nucleoporin and the complex is subsequently translocated through the pore by an energy requiring, Ran-dependent mechanism. At the nucleoplasmic side of the NPC, Ran binds to the importin, the importin/substrate complex dissociates and importin is re-exported from the nucleus to the cytoplasm where GTP hydrolysis releases Ran. The directionality of nuclear import is thought to be conferred by an asymmetric distribution of the GTP- and GDP-bound forms of Ran between the cytoplasm and nucleus. The protein is Transportin-2 (TNPO2) of Homo sapiens (Human).